We begin with the raw amino-acid sequence, 58 residues long: Ribulose bisphosphate carboxylase large chain (58 aa).

Residues 1–2 (MS) constitute a propeptide that is removed on maturation. P3 is modified (N-acetylproline). At K14 the chain carries N6,N6,N6-trimethyllysine.

It belongs to the RuBisCO large chain family. Type I subfamily. As to quaternary structure, heterohexadecamer of 8 large chains and 8 small chains.

Its subcellular location is the plastid. It localises to the chloroplast. It catalyses the reaction 2 (2R)-3-phosphoglycerate + 2 H(+) = D-ribulose 1,5-bisphosphate + CO2 + H2O. The enzyme catalyses D-ribulose 1,5-bisphosphate + O2 = 2-phosphoglycolate + (2R)-3-phosphoglycerate + 2 H(+). RuBisCO catalyzes two reactions: the carboxylation of D-ribulose 1,5-bisphosphate, the primary event in carbon dioxide fixation, as well as the oxidative fragmentation of the pentose substrate in the photorespiration process. Both reactions occur simultaneously and in competition at the same active site. In Euonymus maackii (Maack's spindle tree), this protein is Ribulose bisphosphate carboxylase large chain (rbcL).